The sequence spans 580 residues: Mucolipin-1 (580 aa).

The disordered stretch occupies residues 1–38 (MATPAGRRASETERLLTPNPGYGTQVGTSPAPTTPTEE). Residues 1-65 (MATPAGRRAS…FRAKGRKPCK (65 aa)) lie on the Cytoplasmic side of the membrane. At Ser10 the chain carries Phosphoserine. Positions 11–16 (ETERLL) match the Dileucine motif; mediates targeting to lysosomes motif. Residues 42-62 (RRRLKYFFMSPCDKFRAKGRK) are interaction with phosphoinositides. Residues 66–86 (LMLQVVKILVVTVQLILFGLS) form a helical membrane-spanning segment. The Extracellular segment spans residues 87–298 (NQLVVTFREE…VSRHGDNSFR (212 aa)). Residues 107 to 121 (LGYSDGSDDTFAAYT) form an extracellular/lumenal pore loop region. Cys166 and Cys192 are joined by a disulfide. N-linked (GlcNAc...) asparagine glycosylation is found at Asn220 and Asn230. A disulfide bridge connects residues Cys253 and Cys284. The helical transmembrane segment at 299 to 321 (LLFDVVVILTCSLSFLLCARSLL) threads the bilayer. Over 322-350 (RGFLLQNEFVVFMWRRRGREISLWERLEF) the chain is Cytoplasmic. A helical transmembrane segment spans residues 351-371 (VNGWYILLVTSDVLTISGTVM). Residues 372-382 (KIGIEAKNLAS) lie on the Extracellular side of the membrane. A helical membrane pass occupies residues 383-405 (YDVCSILLGTSTLLVWVGVIRYL). The Cytoplasmic segment spans residues 406 to 427 (TFFHKYNILIATLRVALPSVMR). A helical transmembrane segment spans residues 428-448 (FCCCVAVIYLGYCFCGWIVLG). Residues 449–456 (PYHVKFRS) lie on the Extracellular side of the membrane. The segment at residues 457–477 (LSMVSECLFSLINGDDMFVTF) is an intramembrane region (pore-forming). The short motif at 469 to 474 (NGDDMF) is the Selectivity filter element. At 478–491 (AAMQAQQGHSSLVW) the chain is on the extracellular side. Residues 492 to 513 (LFSQLYLYSFISLFIYMVLSLF) form a helical membrane-spanning segment. Over 514–580 (IALITGAYDT…SPEDHSLLVN (67 aa)) the chain is Cytoplasmic. Ser557 is modified (phosphoserine). The residue at position 559 (Ser559) is a Phosphoserine; by PAK. Positions 565–567 (CCC) are required for palmitoylation and association with membranes. The Dileucine internalization motif; mediates AP2 complex-dependent internalization signature appears at 573 to 578 (EDHSLL).

Belongs to the transient receptor (TC 1.A.4) family. Polycystin subfamily. MCOLN1 sub-subfamily. As to quaternary structure, homotetramer. Homooligomer. Can heterooligomerize with MCOLN2 or MCOLN3; heteromeric assemblies have different channel properties as compared to the respective homooligomers and may be tissue-specific. Interacts with PDCD6. Interacts with TMEM163. Interacts with LAPTM4B. In terms of processing, palmitoylated; involved in association with membranes. Phosphorylation by PKA inhibits channel activity. Dephosphorylation increases activity. Post-translationally, proteolytically cleaved probably involving multiple lysosomal proteases including cathepsin B; inhibits lysosomal channel activity. As to expression, widely expressed, with the highest expression in brain, liver and kidney.

The protein localises to the late endosome membrane. It is found in the lysosome membrane. It localises to the cytoplasmic vesicle membrane. The protein resides in the cell projection. Its subcellular location is the phagocytic cup. The protein localises to the cytoplasmic vesicle. It is found in the phagosome membrane. It localises to the cell membrane. It catalyses the reaction Ca(2+)(in) = Ca(2+)(out). The catalysed reaction is Fe(2+)(in) = Fe(2+)(out). The enzyme catalyses Mg(2+)(in) = Mg(2+)(out). It carries out the reaction K(+)(in) = K(+)(out). It catalyses the reaction Na(+)(in) = Na(+)(out). Channel activity is controlled by multiple regulatory mechanisms in different subcellular compartments. Lower pH by itself has an inhibitory effect on channel conductance. Channel function is transiently modulated by changes in Ca(2+) in a pH-dependent manner; pH changes modify the aggregation state of unitary channels; a negative cooperativity between extracellular/lumenal Ca(2+) and H(+) is suggested. Fe(2+) channel activity is potentiated by low pH. Regulated by phosphoinositides in a compartment-specific manner: in lysosomes activated by PtdIns(3,5)P2 (Phosphatidylinositol 3,5-bisphosphate) and at the plasma membrane inhibited by PtdIns(4,5)P2 (Phosphatidylinositol 4,5-bisphosphate). Functionally, nonselective cation channel probably playing a role in the regulation of membrane trafficking events and of metal homeostasis. Acts as a Ca(2+)-permeable cation channel with inwardly rectifying activity. Proposed to play a major role in Ca(2+) release from late endosome and lysosome vesicles to the cytoplasm, which is important for many lysosome-dependent cellular events, including the fusion and trafficking of these organelles, exocytosis and autophagy. Required for efficient uptake of large particles in macrophages in which Ca(2+) release from the lysosomes triggers lysosomal exocytosis. May also play a role in phagosome-lysosome fusion. Involved in lactosylceramide trafficking indicative for a role in the regulation of late endocytic membrane fusion/fission events. By mediating lysosomal Ca(2+) release is involved in regulation of mTORC1 signaling and in mTOR/TFEB-dependent lysosomal adaptation to environmental cues such as nutrient levels. Seems to act as lysosomal active oxygen species (ROS) sensor involved in ROS-induced TFEB activation and autophagy. Also functions as a Fe(2+) permeable channel in late endosomes and lysosomes. Also permeable to Mg(2+), Na(+). K(+) and Cs(+). Proposed to play a role in zinc homeostasis probably implicating its association with TMEM163. In adaptive immunity, TRPML2 and TRPML1 may play redundant roles in the function of the specialized lysosomes of B cells. Its function is as follows. May contribute to cellular lipase activity within the late endosomal pathway or at the cell surface which may be involved in processes of membrane reshaping and vesiculation, especially the growth of tubular structures. However, it is not known, whether it conveys the enzymatic activity directly, or merely facilitates the activity of an associated phospholipase. This chain is Mucolipin-1, found in Mus musculus (Mouse).